The chain runs to 494 residues: Putative NAD kinase 3 (494 aa).

Belongs to the NAD kinase family.

It carries out the reaction NAD(+) + ATP = ADP + NADP(+) + H(+). This is Putative NAD kinase 3 from Oryza sativa subsp. japonica (Rice).